Here is a 296-residue protein sequence, read N- to C-terminus: Ribosomal RNA small subunit methyltransferase A (296 aa).

Positions 31, 33, 58, 79, 104, and 129 each coordinate S-adenosyl-L-methionine.

Belongs to the class I-like SAM-binding methyltransferase superfamily. rRNA adenine N(6)-methyltransferase family. RsmA subfamily.

The protein resides in the cytoplasm. It catalyses the reaction adenosine(1518)/adenosine(1519) in 16S rRNA + 4 S-adenosyl-L-methionine = N(6)-dimethyladenosine(1518)/N(6)-dimethyladenosine(1519) in 16S rRNA + 4 S-adenosyl-L-homocysteine + 4 H(+). Functionally, specifically dimethylates two adjacent adenosines (A1518 and A1519) in the loop of a conserved hairpin near the 3'-end of 16S rRNA in the 30S particle. May play a critical role in biogenesis of 30S subunits. In Shouchella clausii (strain KSM-K16) (Alkalihalobacillus clausii), this protein is Ribosomal RNA small subunit methyltransferase A.